Consider the following 169-residue polypeptide: Gametocyte-specific factor 1-like (169 aa).

2 consecutive CHHC U11-48K-type zinc fingers follow at residues 6 to 33 (LETC…RRKN) and 40 to 67 (MASC…VNKS). The Zn(2+) site is built by C9, H15, H25, C29, C43, H49, H59, and C63. Disordered stretches follow at residues 67-103 (STME…LPNP) and 131-169 (SDTR…LLKA). Positions 131–158 (SDTRESETDDHNPIPDCPRRRSSDRESE) are enriched in basic and acidic residues.

This sequence belongs to the UPF0224 (FAM112) family.

The protein is Gametocyte-specific factor 1-like (GTSF1L) of Bos taurus (Bovine).